A 227-amino-acid chain; its full sequence is ATP synthase F(0) complex subunit a (227 aa).

Transmembrane regions (helical) follow at residues Leu14–Pro34, Trp69–Leu89, Gln98–Leu118, Glu132–Ile152, Phe180–Leu200, and Leu202–Tyr222.

This sequence belongs to the ATPase A chain family. Component of the ATP synthase complex composed at least of ATP5F1A/subunit alpha, ATP5F1B/subunit beta, ATP5MC1/subunit c (homooctomer), MT-ATP6/subunit a, MT-ATP8/subunit 8, ATP5ME/subunit e, ATP5MF/subunit f, ATP5MG/subunit g, ATP5MK/subunit k, ATP5MJ/subunit j, ATP5F1C/subunit gamma, ATP5F1D/subunit delta, ATP5F1E/subunit epsilon, ATP5PF/subunit F6, ATP5PB/subunit b, ATP5PD/subunit d, ATP5PO/subunit OSCP. ATP synthase complex consists of a soluble F(1) head domain (subunits alpha(3) and beta(3)) - the catalytic core - and a membrane F(0) domain - the membrane proton channel (subunits c, a, 8, e, f, g, k and j). These two domains are linked by a central stalk (subunits gamma, delta, and epsilon) rotating inside the F1 region and a stationary peripheral stalk (subunits F6, b, d, and OSCP). Interacts with DNAJC30; interaction is direct.

The protein localises to the mitochondrion inner membrane. The catalysed reaction is H(+)(in) = H(+)(out). In terms of biological role, subunit a, of the mitochondrial membrane ATP synthase complex (F(1)F(0) ATP synthase or Complex V) that produces ATP from ADP in the presence of a proton gradient across the membrane which is generated by electron transport complexes of the respiratory chain. ATP synthase complex consist of a soluble F(1) head domain - the catalytic core - and a membrane F(1) domain - the membrane proton channel. These two domains are linked by a central stalk rotating inside the F(1) region and a stationary peripheral stalk. During catalysis, ATP synthesis in the catalytic domain of F(1) is coupled via a rotary mechanism of the central stalk subunits to proton translocation. With the subunit c (ATP5MC1), forms the proton-conducting channel in the F(0) domain, that contains two crucial half-channels (inlet and outlet) that facilitate proton movement from the mitochondrial intermembrane space (IMS) into the matrix. Protons are taken up via the inlet half-channel and released through the outlet half-channel, following a Grotthuss mechanism. The chain is ATP synthase F(0) complex subunit a from Tetraodon nigroviridis (Spotted green pufferfish).